Reading from the N-terminus, the 185-residue chain is Elongation factor P (185 aa).

This sequence belongs to the elongation factor P family.

The protein resides in the cytoplasm. It functions in the pathway protein biosynthesis; polypeptide chain elongation. Its function is as follows. Involved in peptide bond synthesis. Stimulates efficient translation and peptide-bond synthesis on native or reconstituted 70S ribosomes in vitro. Probably functions indirectly by altering the affinity of the ribosome for aminoacyl-tRNA, thus increasing their reactivity as acceptors for peptidyl transferase. This chain is Elongation factor P, found in Dictyoglomus thermophilum (strain ATCC 35947 / DSM 3960 / H-6-12).